The primary structure comprises 255 residues: 3-oxoacyl-[acyl-carrier-protein] reductase MabA (255 aa).

NADP(+) is bound by residues 32–35, Arg-55, 69–70, Gly-98, Tyr-161, Lys-165, Ile-194, and Arg-205; these read NRGI and DV. Tyr-161 serves as the catalytic Proton acceptor.

This sequence belongs to the short-chain dehydrogenases/reductases (SDR) family. In terms of assembly, homotetramer.

The protein localises to the secreted. It is found in the cell wall. It carries out the reaction a (3R)-hydroxyacyl-[ACP] + NADP(+) = a 3-oxoacyl-[ACP] + NADPH + H(+). It catalyses the reaction a (3R)-3-hydroxyacyl-CoA + NADP(+) = a 3-oxoacyl-CoA + NADPH + H(+). The enzyme catalyses (3R)-3-hydroxybutanoyl-CoA + NADP(+) = acetoacetyl-CoA + NADPH + H(+). The catalysed reaction is (3R)-hydroxyoctanoyl-CoA + NADP(+) = 3-oxooctanoyl-CoA + NADPH + H(+). Its pathway is lipid metabolism; mycolic acid biosynthesis. Its function is as follows. Part of the mycobacterial fatty acid elongation system FAS-II, which is involved in mycolic acid biosynthesis. Catalyzes the NADPH-dependent reduction of beta-ketoacyl derivatives, the second step of the FAS-II elongation cycle. Has a preference for longer substrates. Can use CoA derivatives as substrates in vitro. The protein is 3-oxoacyl-[acyl-carrier-protein] reductase MabA of Mycolicibacterium smegmatis (strain ATCC 700084 / mc(2)155) (Mycobacterium smegmatis).